The following is a 235-amino-acid chain: Carbohydrate deacetylase (235 aa).

2 residues coordinate Mg(2+): His-61 and His-124.

It belongs to the YdjC deacetylase family. Requires Mg(2+) as cofactor.

Probably catalyzes the deacetylation of acetylated carbohydrates an important step in the degradation of oligosaccharides. In Bacillus cereus (strain B4264), this protein is Carbohydrate deacetylase.